The following is a 351-amino-acid chain: DNA-directed RNA polymerase subunit alpha (351 aa).

The segment at 1 to 236 (MSVNTKNWQE…DQLTLFVHFE (236 aa)) is alpha N-terminal domain (alpha-NTD). Residues 256–351 (DDANQLNRYL…AKKLEQELLG (96 aa)) are alpha C-terminal domain (alpha-CTD).

It belongs to the RNA polymerase alpha chain family. As to quaternary structure, homodimer. The RNAP catalytic core consists of 2 alpha, 1 beta, 1 beta' and 1 omega subunit. When a sigma factor is associated with the core the holoenzyme is formed, which can initiate transcription.

The catalysed reaction is RNA(n) + a ribonucleoside 5'-triphosphate = RNA(n+1) + diphosphate. In terms of biological role, DNA-dependent RNA polymerase catalyzes the transcription of DNA into RNA using the four ribonucleoside triphosphates as substrates. This chain is DNA-directed RNA polymerase subunit alpha, found in Erythrobacter litoralis (strain HTCC2594).